The following is a 132-amino-acid chain: Sodium/calcium exchanger regulatory protein 1 (132 aa).

(9Z)-hexadecenoate contacts are provided by R126 and Y128.

This sequence belongs to the calycin superfamily. Fatty-acid binding protein (FABP) family. In terms of assembly, interacts with Na(+)/Ca(2+) exchanger NCXSQ1; ReP1-NCXSQ phosphorylation does not affect the interaction. In terms of processing, phosphorylated. Phosphorylation may result in the release of the bound fatty acid. In terms of tissue distribution, expressed in the optic nerve (at protein level).

The protein resides in the cytoplasm. The protein localises to the membrane. Its function is as follows. Binds and may transport fatty acids such as palmitoleate. Also binds poly-phosphoinositides including phosphatidylinositol 4-phosphate (PtdIns(4)P), phosphatidylinositol 4,5-bisphosphate (PtdIns(4,5)P2) and phosphatidylinositol 3,4,5-trisphosphate (PtdIns(3,4,5)P3), and phosphatidic acid. When phosphorylated, stimulates the activity of optic nerve Na(+)/Ca(2+) exchanger. This chain is Sodium/calcium exchanger regulatory protein 1, found in Doryteuthis pealeii (Longfin inshore squid).